The chain runs to 208 residues: MARYLGPKLKLSRREGTDLFLKSGVRAIESKCRNRLDVAPGQHGARKPRLSDYGSQLREKQKVRRIYGILERQFRNYYTEANRLKGNTGENLLVLLEGRLDNVVYRMGFAATRAEARQLVSHKSIVVNGRVVNIPSYQVSVDDVVTVREKSKKQARIKASLELASQREKPTWLEVDAVKMEGVFKRTPERSDLSADINEHLIVELYSK.

The S4 RNA-binding domain maps to glycine 98–lysine 158.

It belongs to the universal ribosomal protein uS4 family. Part of the 30S ribosomal subunit. Contacts protein S5. The interaction surface between S4 and S5 is involved in control of translational fidelity.

In terms of biological role, one of the primary rRNA binding proteins, it binds directly to 16S rRNA where it nucleates assembly of the body of the 30S subunit. With S5 and S12 plays an important role in translational accuracy. The polypeptide is Small ribosomal subunit protein uS4 (Haemophilus ducreyi (strain 35000HP / ATCC 700724)).